The following is a 61-amino-acid chain: Lens epithelial cell protein LEP503 (61 aa).

This is Lens epithelial cell protein LEP503 (Lenep) from Mus musculus (Mouse).